A 168-amino-acid chain; its full sequence is MPRSRTNGNFIDKTFSIVANILLRVIPTTSGEKEAFTYYRDGMSAQSEGNYAEALQNYYEAMRLEIDPYDRSYILYNIGLIHTSNGEHTKALEYYFRALERNPFLPQAFNNMAVICHYRGEQAIQQGDSEIAEAWFDQAAEYWKQAIALTPGNYIEAHNWLKITRRFE.

TPR repeat units follow at residues 35-68, 72-105, and 120-153; these read AFTYYRDGMSAQSEGNYAEALQNYYEAMRLEIDP, SYILYNIGLIHTSNGEHTKALEYYFRALERNPFL, and GEQAIQQGDSEIAEAWFDQAAEYWKQAIALTPGN.

It belongs to the Ycf3 family.

It is found in the plastid. The protein localises to the chloroplast thylakoid membrane. Essential for the assembly of the photosystem I (PSI) complex. May act as a chaperone-like factor to guide the assembly of the PSI subunits. The protein is Photosystem I assembly protein Ycf3 of Solanum bulbocastanum (Wild potato).